The primary structure comprises 464 residues: ERO1-like protein alpha (464 aa).

The N-terminal stretch at 1-23 is a signal peptide; it reads MGRGWGLLVGLLGVVWLLRSGQG. 8 cysteine pairs are disulfide-bonded: Cys35/Cys48, Cys37/Cys46, Cys85/Cys387, Cys94/Cys99, Cys94/Cys130, Cys99/Cys104, Cys207/Cys237, and Cys390/Cys393. A phosphoserine mark is found at Ser106, Ser142, and Ser144. Arg186, Thr188, and Trp199 together coordinate FAD. FAD contacts are provided by Ser248 and His251. A glycan (N-linked (GlcNAc...) asparagine) is linked at Asn276. The FAD site is built by Arg283 and Arg296. N-linked (GlcNAc...) asparagine glycosylation is present at Asn380.

Belongs to the EROs family. As to quaternary structure, predominantly monomer. May function both as a monomer and a homodimer. Interacts with PDILT. Interacts with ERP44; the interaction results in retention of ERO1A in the endoplasmic reticulum. It depends on FAD as a cofactor. Post-translationally, N-glycosylated. In terms of processing, the Cys-94/Cys-99 and Cys-390/Cys-393 disulfide bonds constitute the redox-active center. The Cys-94/Cys-99 disulfide bond may accept electron from P4HB and funnel them to the active site disulfide Cys-390/Cys-393. The regulatory Cys-99/Cys-104 disulfide bond stabilizes the other regulatory bond Cys-94/Cys-130. Phosphorylated on Ser-144 by FAM20C in the Golgi which increases its enzymatic activity. Phosphorylation is induced by lactation. It is also induced by hypoxia and reductive stress.

The protein resides in the endoplasmic reticulum membrane. Its subcellular location is the golgi apparatus lumen. It is found in the secreted. It localises to the cell projection. The protein localises to the dendrite. Its activity is regulated as follows. Enzyme activity is tightly regulated to prevent the accumulation of reactive oxygen species in the endoplasmic reticulum. Reversibly down-regulated by the formation of disulfide bonds between the active site Cys-94 and Cys-130, and between Cys-99 and Cys-104. Glutathione may be required to regulate its activity in the endoplasmic reticulum. In terms of biological role, oxidoreductase involved in disulfide bond formation in the endoplasmic reticulum. Efficiently reoxidizes P4HB/PDI, the enzyme catalyzing protein disulfide formation, in order to allow P4HB to sustain additional rounds of disulfide formation. Following P4HB reoxidation, passes its electrons to molecular oxygen via FAD, leading to the production of reactive oxygen species (ROS) in the cell. Required for the proper folding of immunoglobulins. Plays an important role in ER stress-induced, CHOP-dependent apoptosis by activating the inositol 1,4,5-trisphosphate receptor IP3R1. The sequence is that of ERO1-like protein alpha from Rattus norvegicus (Rat).